A 334-amino-acid polypeptide reads, in one-letter code: Nucleoid-associated protein YpsIP31758_2721 (334 aa).

It belongs to the YejK family.

The protein localises to the cytoplasm. It is found in the nucleoid. The protein is Nucleoid-associated protein YpsIP31758_2721 of Yersinia pseudotuberculosis serotype O:1b (strain IP 31758).